Consider the following 314-residue polypeptide: Mycothiol acetyltransferase (314 aa).

1D-myo-inositol 2-(L-cysteinylamino)-2-deoxy-alpha-D-glucopyranoside is bound at residue glutamate 39. Acetyl-CoA is bound at residue 80-82 (LTA). The N-acetyltransferase domain maps to 159-313 (FVCRRFDPIS…PTGELGHEPP (155 aa)). 1D-myo-inositol 2-(L-cysteinylamino)-2-deoxy-alpha-D-glucopyranoside contacts are provided by glutamate 186, lysine 228, and glutamate 237. Residues 241–243 (LGV) and 248–254 (QGQGVGR) each bind acetyl-CoA. Tyrosine 275 is a binding site for 1D-myo-inositol 2-(L-cysteinylamino)-2-deoxy-alpha-D-glucopyranoside.

This sequence belongs to the acetyltransferase family. MshD subfamily. Monomer.

The catalysed reaction is 1D-myo-inositol 2-(L-cysteinylamino)-2-deoxy-alpha-D-glucopyranoside + acetyl-CoA = mycothiol + CoA + H(+). Catalyzes the transfer of acetyl from acetyl-CoA to desacetylmycothiol (Cys-GlcN-Ins) to form mycothiol. The chain is Mycothiol acetyltransferase from Jonesia denitrificans (strain ATCC 14870 / DSM 20603 / BCRC 15368 / CIP 55.134 / JCM 11481 / NBRC 15587 / NCTC 10816 / Prevot 55134) (Listeria denitrificans).